The primary structure comprises 429 residues: Histidine--tRNA ligase (429 aa).

Belongs to the class-II aminoacyl-tRNA synthetase family. Homodimer.

It is found in the cytoplasm. The catalysed reaction is tRNA(His) + L-histidine + ATP = L-histidyl-tRNA(His) + AMP + diphosphate + H(+). This chain is Histidine--tRNA ligase, found in Streptococcus pneumoniae serotype 4 (strain ATCC BAA-334 / TIGR4).